The chain runs to 345 residues: Heat stress transcription factor A-2 (345 aa).

Over residues Gly-17–Ser-30 the composition is skewed to low complexity. Residues Gly-17–Thr-40 form a disordered region. The DNA-binding element occupies Pro-42 to Asn-136. The segment at Ser-150–Leu-216 is hydrophobic repeat HR-A/B. Positions Glu-231–Leu-238 match the Nuclear localization signal motif. The AHA1 motif lies at Glu-273 to Asp-282. Residue Lys-315 forms a Glycyl lysine isopeptide (Lys-Gly) (interchain with G-Cter in SUMO) linkage. An AHA2 motif is present at residues Leu-324 to Asp-333. The Nuclear export signal signature appears at Met-334–Leu-341.

This sequence belongs to the HSF family. Class A subfamily. Homotrimer. Interacts with SUMO1. Binds to HSBP. Post-translationally, exhibits temperature-dependent phosphorylation. In terms of processing, sumoylated at Lys-315. Sumoylation represses its function.

Its subcellular location is the cytoplasm. The protein resides in the nucleus. In terms of biological role, transcriptional activator that specifically binds DNA sequence 5'-AGAAnnTTCT-3' known as heat shock promoter elements (HSE). Seems to be involved in other environmental stress responses. Activates ascorbate peroxidase 2 (APX2) in addition to several heat shock protein (HSPs). Binds to the promoter of SGIP1 and activates its expression in heat acclimated plants. Involved in the mechanisms necessary for quick response to heat and subsequent heritable transgenerational memory of heat acclimation (global warming) such as early flowering and attenuated immunity; this process includes epigenetic regulation as well as post-transcriptional gene silencing (PTGS). In response to heat, HSFA2 is activated and promotes the expression of REF6 which in turn derepresses HSFA2, thus establishing an inheritable feedback loop able to trigger SGIP1 and subsequent SGIP1-mediated SGS3 degradation; this prevents the biosynthesis of trans-acting siRNA (tasiRNA) and leads to the release of HTT5, which drives early flowering but attenuates immunity. The protein is Heat stress transcription factor A-2 of Arabidopsis thaliana (Mouse-ear cress).